We begin with the raw amino-acid sequence, 266 residues long: ATP synthase subunit a (266 aa).

A run of 7 helical transmembrane segments spans residues 41–61 (IDTL…FWLA), 98–118 (VIAP…LMDL), 119–139 (VPID…WKIL), 152–172 (LSVL…GGWL), 178–198 (HPLG…EFIA), 216–236 (LVFI…GTPW), and 237–257 (AIFH…LTVV).

Belongs to the ATPase A chain family. As to quaternary structure, F-type ATPases have 2 components, CF(1) - the catalytic core - and CF(0) - the membrane proton channel. CF(1) has five subunits: alpha(3), beta(3), gamma(1), delta(1), epsilon(1). CF(0) has three main subunits: a(1), b(2) and c(9-12). The alpha and beta chains form an alternating ring which encloses part of the gamma chain. CF(1) is attached to CF(0) by a central stalk formed by the gamma and epsilon chains, while a peripheral stalk is formed by the delta and b chains.

The protein resides in the cell inner membrane. Its function is as follows. Key component of the proton channel; it plays a direct role in the translocation of protons across the membrane. The sequence is that of ATP synthase subunit a from Halorhodospira halophila (strain DSM 244 / SL1) (Ectothiorhodospira halophila (strain DSM 244 / SL1)).